A 515-amino-acid polypeptide reads, in one-letter code: 2-isopropylmalate synthase (515 aa).

Residues 5–267 (VIIFDTTLRD…HTGLDHKEIH (263 aa)) form the Pyruvate carboxyltransferase domain. 4 residues coordinate Mn(2+): D14, H202, H204, and N238. A regulatory domain region spans residues 392 to 515 (KLNYLSVQSG…EMKQQKFATV (124 aa)).

Belongs to the alpha-IPM synthase/homocitrate synthase family. LeuA type 1 subfamily. Homodimer. Mn(2+) serves as cofactor.

It localises to the cytoplasm. The catalysed reaction is 3-methyl-2-oxobutanoate + acetyl-CoA + H2O = (2S)-2-isopropylmalate + CoA + H(+). The protein operates within amino-acid biosynthesis; L-leucine biosynthesis; L-leucine from 3-methyl-2-oxobutanoate: step 1/4. In terms of biological role, catalyzes the condensation of the acetyl group of acetyl-CoA with 3-methyl-2-oxobutanoate (2-ketoisovalerate) to form 3-carboxy-3-hydroxy-4-methylpentanoate (2-isopropylmalate). The chain is 2-isopropylmalate synthase from Vibrio atlanticus (strain LGP32) (Vibrio splendidus (strain Mel32)).